A 163-amino-acid polypeptide reads, in one-letter code: Nucleotide-binding protein CYA_0935 (163 aa).

This sequence belongs to the YajQ family.

Functionally, nucleotide-binding protein. This Synechococcus sp. (strain JA-3-3Ab) (Cyanobacteria bacterium Yellowstone A-Prime) protein is Nucleotide-binding protein CYA_0935.